The chain runs to 2559 residues: Nonribosomal peptide synthetase asqK (2559 aa).

An adenylation 1 region spans residues 90–474; that stretch reads YRPSHTAIHA…SRKDSQVKIR (385 aa). In terms of domain architecture, Carrier 1 spans 593 to 669; it reads TNIEQLVHEL…SLVHYPAGLE (77 aa). Position 627 is an O-(pantetheine 4'-phosphoryl)serine (Ser627). The tract at residues 695–989 is condensation 1; sequence TVEQSFSQAR…GNVQCIRTKV (295 aa). The interval 1155-1562 is adenylation 2; it reads FDEQVRAQTD…GRMDQQVKVR (408 aa). A methyltransferase region spans residues 1681 to 1776; that stretch reads LEIGTGSGMI…NTIKDLVRQG (96 aa). Residues 2090–2164 form the Carrier 2 domain; that stretch reads AFTSEIERAV…GLAQHLQGLG (75 aa). Ser2124 carries the post-translational modification O-(pantetheine 4'-phosphoryl)serine. The condensation 2 stretch occupies residues 2261–2409; the sequence is FDGVSLSAIL…VNRCLLRVKV (149 aa).

The protein belongs to the NRP synthetase family.

The enzyme catalyses O-methyl-L-tyrosine + anthranilate + S-adenosyl-L-methionine + 2 ATP = (-)-4'-methoxycyclopeptine + 2 AMP + S-adenosyl-L-homocysteine + 2 diphosphate + 2 H(+). It catalyses the reaction anthranilate + L-phenylalanine + S-adenosyl-L-methionine + 2 ATP = cyclopeptine + 2 AMP + S-adenosyl-L-homocysteine + 2 diphosphate + 2 H(+). It functions in the pathway secondary metabolite biosynthesis. The protein operates within alkaloid biosynthesis. Its pathway is mycotoxin biosynthesis. Its function is as follows. Nonribosomal peptide synthetase; part of the gene cluster that mediates the biosynthesis of the aspoquinolone mycotoxins. The first stage is catalyzed by the nonribosomal peptide synthetase asqK that condenses anthranilic acid and O-methyl-L-tyrosine to produce 4'-methoxycyclopeptin. AsqK is also able to use anthranilic acid and L-phenylalanine as substrates to produce cyclopeptin, but at a tenfold lower rate. Within the pathway, 4'-methoxycyclopeptin is then converted to 4'-methoxydehydrocyclopeptin by the ketoglutarate-dependent dioxygenase asqJ. AsqJ also converts its first product 4'-methoxydehydrocyclopeptin to 4'-methoxycyclopenin. The following conversion of 4'-methoxycyclopenin into 4'-methoxyviridicatin is catalyzed by the cyclopenase asqI. 4'-methoxyviridicatin is the precursor of quinolone natural products, and is further converted to quinolinone B. The prenyltransferase asqH1 then catalyzes the canonical Friedel-Crafts alkylation of quinolinone B with dimethylallyl cation to yield dimethylallyl quinolone, which is subjected to FAD-dependent dehydrogenation by the FAD-linked oxidoreductase asqF to yield conjugated aryl diene. The delta(3') double bond then serves as the site of the second alkylation with DMAPP catalyzed by the prenyltransferase asqH2 to yield a carbenium ion intermediate, which can be attacked by H(2)O to yield a styrenyl quinolone containing a C3'-hydroxyprenyl chain. The FAD-dependent monooxygenase asqG performs epoxidation of the terminal C7'-C8' olefin. Finally, after dehydratation of the epoxide at C3 by asqC, the quinolone epoxide rearrangement protein asqO catalyzes an enzymatic 3-exo-tet cyclization to yield the cyclopropyl-THF ring system in aspoquinolone. The polypeptide is Nonribosomal peptide synthetase asqK (Emericella nidulans (strain FGSC A4 / ATCC 38163 / CBS 112.46 / NRRL 194 / M139) (Aspergillus nidulans)).